A 137-amino-acid chain; its full sequence is 1,4-dihydroxy-2-naphthoyl-CoA hydrolase (137 aa).

D12 is an active-site residue.

Belongs to the 4-hydroxybenzoyl-CoA thioesterase family. DHNA-CoA hydrolase subfamily.

It catalyses the reaction 1,4-dihydroxy-2-naphthoyl-CoA + H2O = 1,4-dihydroxy-2-naphthoate + CoA + H(+). The protein operates within cofactor biosynthesis; phylloquinone biosynthesis. It functions in the pathway quinol/quinone metabolism; 1,4-dihydroxy-2-naphthoate biosynthesis; 1,4-dihydroxy-2-naphthoate from chorismate: step 7/7. In terms of biological role, catalyzes the hydrolysis of 1,4-dihydroxy-2-naphthoyl-CoA (DHNA-CoA) to 1,4-dihydroxy-2-naphthoate (DHNA), a reaction involved in phylloquinone (vitamin K1) biosynthesis. The chain is 1,4-dihydroxy-2-naphthoyl-CoA hydrolase from Acaryochloris marina (strain MBIC 11017).